The sequence spans 299 residues: Oxygen-dependent coproporphyrinogen-III oxidase (299 aa).

Serine 92 provides a ligand contact to substrate. The a divalent metal cation site is built by histidine 96 and histidine 106. Catalysis depends on histidine 106, which acts as the Proton donor. 108 to 110 (NVR) contributes to the substrate binding site. Residues histidine 145 and histidine 175 each coordinate a divalent metal cation. Residues 239-274 (YVEFNLVYDRGTLFGLQSGGRAESILMSLPPRVRWE) are important for dimerization. Residue 257 to 259 (GGR) participates in substrate binding.

Belongs to the aerobic coproporphyrinogen-III oxidase family. Homodimer. It depends on a divalent metal cation as a cofactor.

It is found in the cytoplasm. The enzyme catalyses coproporphyrinogen III + O2 + 2 H(+) = protoporphyrinogen IX + 2 CO2 + 2 H2O. It functions in the pathway porphyrin-containing compound metabolism; protoporphyrin-IX biosynthesis; protoporphyrinogen-IX from coproporphyrinogen-III (O2 route): step 1/1. Involved in the heme biosynthesis. Catalyzes the aerobic oxidative decarboxylation of propionate groups of rings A and B of coproporphyrinogen-III to yield the vinyl groups in protoporphyrinogen-IX. In Xanthomonas oryzae pv. oryzae (strain MAFF 311018), this protein is Oxygen-dependent coproporphyrinogen-III oxidase.